Consider the following 862-residue polypeptide: S-layer protein EA1 (862 aa).

A signal peptide spans 1–29 (MAKTNSYKKVIAGTMTAAMVAGIVSPVAA). SLH domains are found at residues 30-93 (AGKS…NAQP), 94-151 (SFKD…KVNG), and 152-214 (ELVT…DNAQ).

It is found in the secreted. The protein localises to the cell wall. It localises to the S-layer. Its function is as follows. The S-layer is a paracrystalline mono-layered assembly of proteins which coat the surface of bacteria. The sequence is that of S-layer protein EA1 (eag) from Bacillus anthracis.